The sequence spans 1382 residues: DNA-directed RNA polymerase subunit beta (1382 aa).

This sequence belongs to the RNA polymerase beta chain family. As to quaternary structure, the RNAP catalytic core consists of 2 alpha, 1 beta, 1 beta' and 1 omega subunit. When a sigma factor is associated with the core the holoenzyme is formed, which can initiate transcription.

The catalysed reaction is RNA(n) + a ribonucleoside 5'-triphosphate = RNA(n+1) + diphosphate. Functionally, DNA-dependent RNA polymerase catalyzes the transcription of DNA into RNA using the four ribonucleoside triphosphates as substrates. The protein is DNA-directed RNA polymerase subunit beta of Anaplasma marginale (strain Florida).